A 419-amino-acid chain; its full sequence is MWPGNAWRAALFWVPRGRRAQSALAQLRGILEGELEGIRGAGTWKSERVITSRQGPHIRVDGVSGGILNFCANNYLGLSSHPEVIQAGLQALEEFGAGLSSVRFICGTQSIHKNLEAKIARFHQREDAILYPSCYDANAGLFEALLTPEDAVLSDELNHASIIDGIRLCKAHKYRYRHLDMADLEAKLQEAQKHRLRLVATDGAFSMDGDIAPLQEICCLASRYGALVFMDECHATGFLGPTGRGTDELLGVMDQVTIINSTLGKALGGASGGYTTGPGPLVSLLRQRARPYLFSNSLPPAVVGCASKALDLLMGSNTIVQSMAAKTQRFRSKMEAAGFTISGASHPICPVMLGDARLASRMADDMLKRGIFVIGFSYPVVPKGKARIRVQISAVHSEEDIDRCVEAFVEVGRLHGALP.

The N-terminal 21 residues, 1-21 (MWPGNAWRAALFWVPRGRRAQ), are a transit peptide targeting the mitochondrion. Lys-45 carries the N6-acetyllysine; alternate modification. Lys-45 is modified (N6-succinyllysine; alternate). Position 134–135 (134–135 (CY)) interacts with pyridoxal 5'-phosphate. His-159 contributes to the substrate binding site. Lys-187 is subject to N6-acetyllysine; alternate. The residue at position 187 (Lys-187) is an N6-succinyllysine; alternate. Pyridoxal 5'-phosphate-binding positions include Ser-206, 262 to 265 (TLGK), and 295 to 296 (SN). At Lys-265 the chain carries N6-(pyridoxal phosphate)lysine. N6-succinyllysine is present on residues Lys-326 and Lys-368. Lys-383 is subject to N6-acetyllysine; alternate. Lys-383 is modified (N6-succinyllysine; alternate). Arg-389 contributes to the substrate binding site.

It belongs to the class-II pyridoxal-phosphate-dependent aminotransferase family. It depends on pyridoxal 5'-phosphate as a cofactor. Strongly expressed in heart, brain, liver and pancreas. Also found in lung.

The protein resides in the mitochondrion. The protein localises to the nucleus. The catalysed reaction is glycine + acetyl-CoA = (2S)-2-amino-3-oxobutanoate + CoA. Functionally, pyridoxal phosphate (PLP) dependent enzyme, which catalyzes the cleavage of 2-amino-3-oxobutanoate to glycine and acetyl-CoA. In Homo sapiens (Human), this protein is 2-amino-3-ketobutyrate coenzyme A ligase, mitochondrial.